A 124-amino-acid chain; its full sequence is MNKVKCYVLFTALLSSLYAHGAPQTITELCSEYRNTQIYTINDKILSYTESMAGKREMVIITFKSGETFQVEVPGSQHIDSQKKAIERMKDTLRITYLTETKIDKLCVWNNKTPNSIAAISMKN.

The signal sequence occupies residues Met-1–Gly-21. Cys-30 and Cys-107 are oxidised to a cystine.

As to quaternary structure, heterohexamer of one A chain and of five B chains.

Functionally, the biological activity of the toxin is produced by the A chain, which activates intracellular adenyl cyclase. This is Heat-labile enterotoxin B chain (eltB) from Escherichia coli.